We begin with the raw amino-acid sequence, 317 residues long: MTFLARLSSSTGDLSTKLVDYVQLTKPRLILLFLITTAAAMEVAGQGRVSPQLLLITLGSGTCAAAAANTINCLYDRDIDAVMERTRHRPLPAGRVAPWEAVFLAVLLAITAFSLLAAFANLLSACLAMAGIAVYVGVYTHWLKRSSPQNIVIGGAAGAIPPLVGWAAVTGELSWAAWVLFGMIFVWTPPHFWPLAMLIQEDYARVQVPMLPVVGGDRVTAQQIFLYTLALVPTSLLLVYPCGVVSWGYGVVAIALGSWFIYRAWQLTQAPAERERARRLFKFSILYMMLLCAAMVGDRLLLPHLSAGLNALGALLK.

The next 9 helical transmembrane spans lie at 29–49 (LILLFLITTAAAMEVAGQGRV), 53–73 (LLLITLGSGTCAAAAANTINC), 102–122 (VFLAVLLAITAFSLLAAFANL), 123–143 (LSACLAMAGIAVYVGVYTHWL), 151–171 (IVIGGAAGAIPPLVGWAAVTG), 179–199 (VLFGMIFVWTPPHFWPLAMLI), 224–241 (IFLYTLALVPTSLLLVYP), 245–267 (VSWGYGVVAIALGSWFIYRAWQL), and 283–303 (FSILYMMLLCAAMVGDRLLLP).

It belongs to the UbiA prenyltransferase family. Protoheme IX farnesyltransferase subfamily.

Its subcellular location is the cell inner membrane. It catalyses the reaction heme b + (2E,6E)-farnesyl diphosphate + H2O = Fe(II)-heme o + diphosphate. The protein operates within porphyrin-containing compound metabolism; heme O biosynthesis; heme O from protoheme: step 1/1. Functionally, converts heme B (protoheme IX) to heme O by substitution of the vinyl group on carbon 2 of heme B porphyrin ring with a hydroxyethyl farnesyl side group. The sequence is that of Protoheme IX farnesyltransferase from Thermosynechococcus vestitus (strain NIES-2133 / IAM M-273 / BP-1).